The following is a 386-amino-acid chain: Glucose-1-phosphate adenylyltransferase (386 aa).

Alpha-D-glucose 1-phosphate is bound by residues Tyr-100, Gly-165, Glu-180–Lys-181, and Ser-191.

It belongs to the bacterial/plant glucose-1-phosphate adenylyltransferase family. As to quaternary structure, homotetramer.

The catalysed reaction is alpha-D-glucose 1-phosphate + ATP + H(+) = ADP-alpha-D-glucose + diphosphate. The protein operates within glycan biosynthesis; glycogen biosynthesis. In terms of biological role, involved in the biosynthesis of ADP-glucose, a building block required for the elongation reactions to produce glycogen. Catalyzes the reaction between ATP and alpha-D-glucose 1-phosphate (G1P) to produce pyrophosphate and ADP-Glc. In Clostridium botulinum (strain Alaska E43 / Type E3), this protein is Glucose-1-phosphate adenylyltransferase.